The following is a 1020-amino-acid chain: Phosphatidylinositol 3-kinase VPS34 (1020 aa).

The C2 PI3K-type domain occupies 49-210 (LSTKFEDPTV…NWLDKMVLPK (162 aa)). The PIK helical domain occupies 331 to 577 (DKELKPTPQL…DGPIKIYMDI (247 aa)). One can recognise a PI3K/PI4K catalytic domain in the interval 666-1004 (YPEESSVFKS…LINDSVNAFL (339 aa)). Residues 672–678 (VFKSSLA) are G-loop. The tract at residues 873–881 (GVGDRHLDN) is catalytic loop. An activation loop region spans residues 892 to 913 (HADFGYILGRDPKPFPPLMKLP).

This sequence belongs to the PI3/PI4-kinase family. Component of the autophagy-specific VPS34 PI3-kinase complex I composed of at least VPS15, VPS30, VPS34, and of the VPS34 PI3-kinase complex II composed of VPS15, VPS30, VPS34 and VPS38. Interacts with VMNA7. In terms of processing, autophosphorylated.

It localises to the golgi apparatus. The protein resides in the trans-Golgi network membrane. The protein localises to the endosome membrane. The catalysed reaction is a 1,2-diacyl-sn-glycero-3-phospho-(1D-myo-inositol) + ATP = a 1,2-diacyl-sn-glycero-3-phospho-(1D-myo-inositol-3-phosphate) + ADP + H(+). Its function is as follows. Multifunctional phosphatidylinositol 3-kinase involved in acidification of vacuoles, pH-dependent cell growth, and autophagocytosis. Plays an important role in protein transport and virulence. Component of the autophagy-specific VPS34 PI3-kinase complex I essential to recruit the ATG8-phosphatidylinositol conjugate and the ATG12-ATG5 conjugate to the pre-autophagosomal structure. Also involved in endosome-to-Golgi retrograde transport as part of the VPS34 PI3-kinase complex II. This second complex is required for the endosome-to-Golgi retrieval of PEP1 and KEX2, and the recruitment of VPS5 and VPS7, two components of the retromer complex, to endosomal membranes (probably through the synthesis of a specific pool of phosphatidylinositol 3-phosphate recruiting the retromer to the endosomes). Finally, it might also be involved in ethanol tolerance and cell wall integrity. The chain is Phosphatidylinositol 3-kinase VPS34 from Candida albicans (strain SC5314 / ATCC MYA-2876) (Yeast).